A 392-amino-acid polypeptide reads, in one-letter code: Ceramide synthase 5 (392 aa).

The Lumenal segment spans residues Met1–His46. An N-linked (GlcNAc...) asparagine glycan is attached at Asn26. A helical transmembrane segment spans residues Ile47–Phe67. Residues Cys75–Pro136 form a homeobox-like region. In terms of domain architecture, TLC spans Thr139–Ile340. 4 consecutive transmembrane segments (helical) span residues Phe148–Phe168, Leu183–Phe203, Phe214–Asn234, and Leu272–Ile292. The Last loop motif signature appears at Glu299–Ser309. The helical transmembrane segment at Trp311–Ile331 threads the bilayer. The Cytoplasmic portion of the chain corresponds to Ala332–Glu392. The tract at residues Arg349–Glu392 is disordered. Positions Thr362–Asn378 are enriched in polar residues.

Interacts with PAQR4; the interaction regulates the stability and activity of CERS5 and is inhibited in presence of ceramides. In terms of processing, phosphorylated at the C-terminus by CK2.

The protein resides in the endoplasmic reticulum membrane. It carries out the reaction a sphingoid base + hexadecanoyl-CoA = an N-hexadecanoyl-sphingoid base + CoA + H(+). It catalyses the reaction sphinganine + hexadecanoyl-CoA = N-hexadecanoylsphinganine + CoA + H(+). The catalysed reaction is hexadecasphinganine + hexadecanoyl-CoA = N-hexadecanoylhexadecasphinganine + CoA + H(+). The enzyme catalyses sphing-4-enine + hexadecanoyl-CoA = N-hexadecanoylsphing-4-enine + CoA + H(+). It carries out the reaction 2-hydroxyhexadecanoyl-CoA + sphinganine = N-(2-hydroxyhexadecanoyl)-sphinganine + CoA + H(+). It catalyses the reaction sphinganine + tetradecanoyl-CoA = N-(tetradecanoyl)-sphinganine + CoA + H(+). The catalysed reaction is sphinganine + octadecanoyl-CoA = N-(octadecanoyl)-sphinganine + CoA + H(+). The enzyme catalyses sphinganine + (9Z)-octadecenoyl-CoA = N-(9Z-octadecenoyl)-sphinganine + CoA + H(+). It carries out the reaction a fatty acyl-CoA + sphing-4-enine = an N-acylsphing-4-enine + CoA + H(+). Its pathway is lipid metabolism; sphingolipid metabolism. Its activity is regulated as follows. Inhibited by fumonisin B1. Functionally, ceramide synthase that catalyzes the transfer of the acyl chain from acyl-CoA to a sphingoid base, with high selectivity toward palmitoyl-CoA (hexadecanoyl-CoA; C16:0-CoA). Can use other acyl donors, but with less efficiency. N-acylates sphinganine and sphingosine bases to form dihydroceramides and ceramides in de novo synthesis and salvage pathways, respectively. Plays a role in de novo ceramide synthesis and surfactant homeostasis in pulmonary epithelia. This is Ceramide synthase 5 from Homo sapiens (Human).